A 354-amino-acid chain; its full sequence is Probable calcium-binding protein CML50 (354 aa).

2 stretches are compositionally biased toward low complexity: residues Met1–Gly10 and Tyr28–Gly71. Residues Met1–Tyr159 form a disordered region. The span at Ala72–Pro81 shows a compositional bias: pro residues. The span at Gly106–Pro117 shows a compositional bias: low complexity. 2 consecutive EF-hand domains span residues Gly183–Arg218 and Tyr249–Ser284. Asp196, Asp198, Ser200, Glu207, Asp262, Asp264, Ser266, Arg268, and Glu273 together coordinate Ca(2+).

Its function is as follows. Potential calcium sensor. The sequence is that of Probable calcium-binding protein CML50 (CML50) from Arabidopsis thaliana (Mouse-ear cress).